The primary structure comprises 224 residues: 7-cyano-7-deazaguanine synthase (224 aa).

12–22 contributes to the ATP binding site; the sequence is LSGGLDSSTVT. Zn(2+) is bound by residues Cys193, Cys201, Cys204, and Cys207.

The protein belongs to the QueC family. Requires Zn(2+) as cofactor.

The enzyme catalyses 7-carboxy-7-deazaguanine + NH4(+) + ATP = 7-cyano-7-deazaguanine + ADP + phosphate + H2O + H(+). It participates in purine metabolism; 7-cyano-7-deazaguanine biosynthesis. Its function is as follows. Catalyzes the ATP-dependent conversion of 7-carboxy-7-deazaguanine (CDG) to 7-cyano-7-deazaguanine (preQ(0)). The polypeptide is 7-cyano-7-deazaguanine synthase (Prochlorococcus marinus (strain MIT 9515)).